Here is a 415-residue protein sequence, read N- to C-terminus: METQHSRFLQYITHGSLVKQILLGLAAGIILASLSTQAALAAGLLGTLFVGALKAVAPILVLMLVMASVANHQQGQKTNIRPILFLYLIGTFSAALIAVVLSVLFPSTLALNAQAADITPPSGIVEVLKGLLMSVVANPIHALLNANYIGILVWAVGLGLAFRHGSASTKNLISDASHAVTAIVRVVIRFAPLGIFGLVASTLAETGFGALWGYAHLLMVLIGGMLLVALVINPLIVYWKIRSNPYPLVLRCLRESGVTAFFTRSSAANIPVNMELCRKLNLNEDSYSVAIPLGATINMAGAAITITVLALAAVHTLGIEVDIATALLLSVVASICACGASGVAGGSLLLIPLACSMFGISNDIAMQVVAVGFIIGVLQDSAETALNSSTDVIFTAAVCQAEDAKLAEKERLNLL.

Helical transmembrane passes span 21-41, 45-65, 83-103, 142-162, 193-213, 217-237, 299-319, 331-351, and 358-378; these read ILLG…AALA, LGTL…LMLV, ILFL…VLSV, ALLN…GLAF, LGIF…ALWG, LLMV…PLIV, MAGA…TLGI, VVAS…LLLI, and FGIS…IGVL.

Belongs to the dicarboxylate/amino acid:cation symporter (DAACS) (TC 2.A.23) family.

The protein localises to the cell inner membrane. It catalyses the reaction L-serine(in) + Na(+)(in) = L-serine(out) + Na(+)(out). The catalysed reaction is L-threonine(in) + Na(+)(in) = L-threonine(out) + Na(+)(out). Its function is as follows. Involved in the import of serine and threonine into the cell, with the concomitant import of sodium (symport system). The protein is Serine/threonine transporter SstT of Pectobacterium carotovorum subsp. carotovorum (strain PC1).